We begin with the raw amino-acid sequence, 20 residues long: ANNAGARKAIRKIEARTEVN.

The protein belongs to the bacterial ribosomal protein bS20 family.

Binds directly to 16S ribosomal RNA. The protein is Small ribosomal subunit protein bS20 (rpsT) of Brevundimonas diminuta (Pseudomonas diminuta).